The sequence spans 223 residues: Putative UPF0607 protein LOC392364 (223 aa).

The segment covering 110–138 (KMEVRAEEPKEATEVKDQVETQEQEDNKR) has biased composition (basic and acidic residues). The segment at 110-223 (KMEVRAEEPK…GRTPPARQHG (114 aa)) is disordered. Composition is skewed to polar residues over residues 145–163 (EAASTSRPLETQGNPTSPR) and 174–186 (QLKSLTENNQTDK).

This sequence belongs to the UPF0607 family.

The chain is Putative UPF0607 protein LOC392364 from Homo sapiens (Human).